We begin with the raw amino-acid sequence, 681 residues long: PTS system glucose-specific EIICBA component (681 aa).

The region spanning 3-414 is the PTS EIIC type-1 domain; that stretch reads KKLFGQLQRI…LKYKTPGRED (412 aa). 10 consecutive transmembrane segments (helical) span residues 16-36, 73-93, 126-146, 170-190, 199-219, 273-293, 303-323, 328-348, 355-375, and 383-403; these read LMLPVAILPAAGLLLAIGTAM, MIFALGVAIGLAGGDGVAAIA, ILGIPTLQTGVFGGIIIGALA, FVPIMMATTSFILAFPMALIW, AFSTGLLDSNTGVAVFLFGFI, FMQGEFPVMMFGLPAAALAIY, VVAGLMGSAALTSFLTGITEP, FLFVAPLLFFIHAVLDGLSFL, LHLGYTFSGGFIDYFLLGILP, and VIPVGLVYAVIYYFVFRFLIV. The PTS EIIB type-1 domain maps to 425–506; the sequence is TELPYAVLEA…QQIMNGQVVE (82 aa). The active-site Phosphocysteine intermediate; for EIIB activity is C447. Residues 551–655 enclose the PTS EIIA type-1 domain; the sequence is DQVFSEKMMG…SDITPIIVTQ (105 aa). H603 serves as the catalytic Tele-phosphohistidine intermediate; for EIIA activity.

The protein localises to the cell membrane. It carries out the reaction N(pros)-phospho-L-histidyl-[protein] + D-glucose(out) = D-glucose 6-phosphate(in) + L-histidyl-[protein]. The phosphoenolpyruvate-dependent sugar phosphotransferase system (sugar PTS), a major carbohydrate active transport system, catalyzes the phosphorylation of incoming sugar substrates concomitantly with their translocation across the cell membrane. This system is involved in glucose transport. This chain is PTS system glucose-specific EIICBA component (ptsG), found in Staphylococcus aureus (strain NCTC 8325 / PS 47).